The sequence spans 269 residues: 3-deoxy-manno-octulosonate cytidylyltransferase (269 aa).

This sequence belongs to the KdsB family.

Its subcellular location is the cytoplasm. It catalyses the reaction 3-deoxy-alpha-D-manno-oct-2-ulosonate + CTP = CMP-3-deoxy-beta-D-manno-octulosonate + diphosphate. It participates in nucleotide-sugar biosynthesis; CMP-3-deoxy-D-manno-octulosonate biosynthesis; CMP-3-deoxy-D-manno-octulosonate from 3-deoxy-D-manno-octulosonate and CTP: step 1/1. Its pathway is bacterial outer membrane biogenesis; lipopolysaccharide biosynthesis. In terms of biological role, activates KDO (a required 8-carbon sugar) for incorporation into bacterial lipopolysaccharide in Gram-negative bacteria. This is 3-deoxy-manno-octulosonate cytidylyltransferase from Cupriavidus pinatubonensis (strain JMP 134 / LMG 1197) (Cupriavidus necator (strain JMP 134)).